The sequence spans 232 residues: 2,3,4,5-tetrahydropyridine-2,6-dicarboxylate N-acetyltransferase (232 aa).

It belongs to the transferase hexapeptide repeat family. DapH subfamily.

The catalysed reaction is (S)-2,3,4,5-tetrahydrodipicolinate + acetyl-CoA + H2O = L-2-acetamido-6-oxoheptanedioate + CoA. It functions in the pathway amino-acid biosynthesis; L-lysine biosynthesis via DAP pathway; LL-2,6-diaminopimelate from (S)-tetrahydrodipicolinate (acetylase route): step 1/3. Catalyzes the transfer of an acetyl group from acetyl-CoA to tetrahydrodipicolinate. The polypeptide is 2,3,4,5-tetrahydropyridine-2,6-dicarboxylate N-acetyltransferase (Streptococcus uberis (strain ATCC BAA-854 / 0140J)).